We begin with the raw amino-acid sequence, 221 residues long: PKHD-type hydroxylase PMT9312_1262 (221 aa).

Residues 80–174 (IIHGIMFTKS…RLVCVGWIES (95 aa)) form the Fe2OG dioxygenase domain. Residues His98, Asp100, and His155 each coordinate Fe cation. Arg165 serves as a coordination point for 2-oxoglutarate.

It depends on Fe(2+) as a cofactor. L-ascorbate is required as a cofactor.

In Prochlorococcus marinus (strain MIT 9312), this protein is PKHD-type hydroxylase PMT9312_1262.